The primary structure comprises 150 residues: Aspartate 1-decarboxylase (150 aa).

Serine 24 functions as the Schiff-base intermediate with substrate; via pyruvic acid in the catalytic mechanism. A Pyruvic acid (Ser) modification is found at serine 24. Threonine 56 serves as a coordination point for substrate. The active-site Proton donor is tyrosine 57. Residue 72–74 participates in substrate binding; it reads GAA.

The protein belongs to the PanD family. In terms of assembly, heterooctamer of four alpha and four beta subunits. Requires pyruvate as cofactor. In terms of processing, is synthesized initially as an inactive proenzyme, which is activated by self-cleavage at a specific serine bond to produce a beta-subunit with a hydroxyl group at its C-terminus and an alpha-subunit with a pyruvoyl group at its N-terminus.

It localises to the cytoplasm. The catalysed reaction is L-aspartate + H(+) = beta-alanine + CO2. It participates in cofactor biosynthesis; (R)-pantothenate biosynthesis; beta-alanine from L-aspartate: step 1/1. Its function is as follows. Catalyzes the pyruvoyl-dependent decarboxylation of aspartate to produce beta-alanine. This chain is Aspartate 1-decarboxylase, found in Beijerinckia indica subsp. indica (strain ATCC 9039 / DSM 1715 / NCIMB 8712).